Consider the following 130-residue polypeptide: Cystatin (130 aa).

A signal peptide spans 1 to 19 (MEWKIVVPLFAVAFTVANA). The short motif at 67–71 (QVVSG) is the Secondary area of contact element. Intrachain disulfides connect C85-C94 and C108-C128.

It belongs to the cystatin family.

The protein localises to the secreted. In terms of biological role, cysteine proteinase inhibitor. This chain is Cystatin, found in Oncorhynchus mykiss (Rainbow trout).